The following is a 501-amino-acid chain: MRDTKKMLNRADELDDLYEAVRALIIPHVRAADEACSLKSAGQLHTDDTQRLQNVLVEPYPPKALQERFQFTLPDNEGNGKDGLMHLIRDVLRYSVNTWDQGFMDKLTSSTNPVGVISEIVLGILNTNVHVYHVAPALSVIEKVTGRTLAAYFGFNSPSAGGISCQGGSASNLTSLVVARNSLYPDCKLNGGSSYQFAIFTSCHGHFSMEKAAITCGMGLSSVVHVPVNDDGRMNVSALRELVIQAKAQGKTPLYVNATAGTTVLGVFDPLHEIKTICEEFGMWFHVDASWGGSIIFSAKHRHKLTGCELADSLTISPHKMLNVPMTCSFLLTNNLSSFYTANSLDAGYLFHDTEDDEVWDLANLTLQCGRRADSLKMALAWTYYGAAGFERRINHAFKMAAHLSSIIQKSPDFELVSPNPPPCLQVCFYYTPGGKMAKSEMETSRRTRAMVEKMVDRGFMFDFAPGPKGDFFRVVVNCETLLGTVEGLFKGLEAVGKQVV.

106-108 serves as a coordination point for substrate; sequence KLT. Residue Lys320 is modified to N6-(pyridoxal phosphate)lysine. Arg474 provides a ligand contact to substrate.

This sequence belongs to the group II decarboxylase family. Pyridoxal 5'-phosphate serves as cofactor.

The enzyme catalyses L-aspartate + H(+) = beta-alanine + CO2. The protein operates within secondary metabolite biosynthesis. Its function is as follows. L-aspartate decarboxylase; part of the gene cluster that mediates the biosynthesis of destruxins, insecticidal cyclic hexadepsipeptides which induce flaccid paralysis and visceral muscle contraction in insects through targeting the calcium channels and vacuolar-type ATPases. The aldo-keto reductase dtxS3 converts alpha-ketoisocaproic acid from deaminated leucine into alpha-hydroxyisocaproic acid (HIC), which is the first substrate for destruxin assembly by dtxS1. L-aspartate decarboxylase dtxS4 converts aspartic acid into beta-alanine, the last substrate for the destruxin assembly line performed by dtxS1. The nonribosomal peptide synthetase dtxS1 synthesizes destruxins B and B2, whereas the cytochrome P450 monooxygenase dtxS2 is required to convert destruxin B into other destruxin derivatives, including destructins C, D, A and E. Destruxin E-diol (ED) is further produced in a non-enzymatic manner from destruxin E. Destruxins play an important role in virulence and escape from insect host immune defenses. The chain is L-aspartate decarboxylase dtxS4 from Metarhizium robertsii (strain ARSEF 23 / ATCC MYA-3075) (Metarhizium anisopliae (strain ARSEF 23)).